The sequence spans 523 residues: 2-isopropylmalate synthase (523 aa).

The Pyruvate carboxyltransferase domain occupies 5–267 (VIIFDTTLRD…ETGINAKEIH (263 aa)). Residues D14, H202, H204, and N238 each coordinate Mn(2+). The regulatory domain stretch occupies residues 392–523 (KLQQLVVHSD…QQEKQVLGGV (132 aa)).

It belongs to the alpha-IPM synthase/homocitrate synthase family. LeuA type 1 subfamily. As to quaternary structure, homodimer. Mn(2+) serves as cofactor.

It localises to the cytoplasm. It catalyses the reaction 3-methyl-2-oxobutanoate + acetyl-CoA + H2O = (2S)-2-isopropylmalate + CoA + H(+). Its pathway is amino-acid biosynthesis; L-leucine biosynthesis; L-leucine from 3-methyl-2-oxobutanoate: step 1/4. Functionally, catalyzes the condensation of the acetyl group of acetyl-CoA with 3-methyl-2-oxobutanoate (2-ketoisovalerate) to form 3-carboxy-3-hydroxy-4-methylpentanoate (2-isopropylmalate). In Shewanella piezotolerans (strain WP3 / JCM 13877), this protein is 2-isopropylmalate synthase.